The following is a 285-amino-acid chain: GPN-loop GTPase 3 (285 aa).

13-18 (GSGKST) lines the GTP pocket. A Gly-Pro-Asn (GPN)-loop; involved in dimer interface motif is present at residues 72–74 (GPN). Residue 174–177 (TKMD) coordinates GTP. Residues 262 to 285 (EPKEVDEEPSNSNFDAFFQDTADS) form a disordered region.

It belongs to the GPN-loop GTPase family. Heterodimer with gpn1. Binds to RNA polymerase II (RNAPII).

Small GTPase required for proper localization of RNA polymerase II (RNAPII). May act at an RNAP assembly step prior to nuclear import. The polypeptide is GPN-loop GTPase 3 (Danio rerio (Zebrafish)).